The primary structure comprises 185 residues: Ribosome-recycling factor (185 aa).

Belongs to the RRF family.

The protein resides in the cytoplasm. In terms of biological role, responsible for the release of ribosomes from messenger RNA at the termination of protein biosynthesis. May increase the efficiency of translation by recycling ribosomes from one round of translation to another. This Pseudoalteromonas atlantica (strain T6c / ATCC BAA-1087) protein is Ribosome-recycling factor.